Here is a 309-residue protein sequence, read N- to C-terminus: Homoserine kinase (309 aa).

An ATP-binding site is contributed by 91–101; the sequence is PIGSGLGSSAC.

This sequence belongs to the GHMP kinase family. Homoserine kinase subfamily.

The protein resides in the cytoplasm. The enzyme catalyses L-homoserine + ATP = O-phospho-L-homoserine + ADP + H(+). It functions in the pathway amino-acid biosynthesis; L-threonine biosynthesis; L-threonine from L-aspartate: step 4/5. In terms of biological role, catalyzes the ATP-dependent phosphorylation of L-homoserine to L-homoserine phosphate. This is Homoserine kinase from Yersinia pseudotuberculosis serotype O:1b (strain IP 31758).